A 421-amino-acid polypeptide reads, in one-letter code: Imidazolonepropionase (421 aa).

His-80 and His-82 together coordinate Fe(3+). His-80 and His-82 together coordinate Zn(2+). 4-imidazolone-5-propanoate is bound by residues Arg-89, Tyr-152, and His-185. Tyr-152 contributes to the N-formimidoyl-L-glutamate binding site. His-249 is a Fe(3+) binding site. His-249 is a Zn(2+) binding site. Residue Glu-252 coordinates 4-imidazolone-5-propanoate. Asp-324 is a binding site for Fe(3+). Asp-324 contacts Zn(2+). N-formimidoyl-L-glutamate is bound by residues Asn-326 and Gly-328. A 4-imidazolone-5-propanoate-binding site is contributed by Ser-329.

This sequence belongs to the metallo-dependent hydrolases superfamily. HutI family. In terms of assembly, homodimer. Zn(2+) serves as cofactor. Requires Fe(3+) as cofactor.

It localises to the cytoplasm. It catalyses the reaction 4-imidazolone-5-propanoate + H2O = N-formimidoyl-L-glutamate. It functions in the pathway amino-acid degradation; L-histidine degradation into L-glutamate; N-formimidoyl-L-glutamate from L-histidine: step 3/3. Its function is as follows. Catalyzes the hydrolytic cleavage of the carbon-nitrogen bond in imidazolone-5-propanoate to yield N-formimidoyl-L-glutamate. It is the third step in the universal histidine degradation pathway. This Bacillus subtilis (strain 168) protein is Imidazolonepropionase.